The primary structure comprises 153 residues: MVVLKGVPALLSPELLFALARMGHGDEIVLADVNFPSSSICRGGPEEIRADGLGIPQLLEAVLQLLPLDTYVQSPAMVMELVPSDRKSGLLTPVWTSYQSILSRAGYEFSLGMGRFAFYERAKKAFAVVATGETALYGNLILKKGVLAPKDLC.

The Proton donor role is filled by His24. Asp32 provides a ligand contact to substrate. Asp69 is an active-site residue. The substrate site is built by Met79, Tyr119, Tyr137, and Asn139. The active site involves Tyr119.

Belongs to the RbsD / FucU family. As to quaternary structure, mainly homodimer, but also exists as homotetramer, homooctamer, and homodecamer. The homodimeric form seems catalytically inactive.

The catalysed reaction is alpha-L-fucose = beta-L-fucose. It participates in carbohydrate metabolism; L-fucose metabolism. Functionally, involved in the interconversion between alpha- and beta-L-fucoses. L-Fucose (6-deoxy-L-galactose) exists as alpha-L-fucose (29.5%) and beta-L-fucose (70.5%), the beta-form is metabolized through the salvage pathway. GDP-L-fucose formed either by the de novo or salvage pathways is transported into the endoplasmic reticulum, where it serves as a substrate for N- and O-glycosylations by fucosyltransferases. Fucosylated structures expressed on cell surfaces or secreted in biological fluids are believed to play a critical role in cell-cell adhesion and recognition processes. In Bos taurus (Bovine), this protein is Fucose mutarotase (FUOM).